The primary structure comprises 317 residues: Malate dehydrogenase (317 aa).

NAD(+) contacts are provided by residues 13 to 18 (GAGNIG) and D38. Substrate-binding residues include R87 and R93. Residues N100 and 123–125 (VTN) contribute to the NAD(+) site. Positions 125 and 156 each coordinate substrate. H180 serves as the catalytic Proton acceptor.

It belongs to the LDH/MDH superfamily. MDH type 3 family.

The catalysed reaction is (S)-malate + NAD(+) = oxaloacetate + NADH + H(+). Catalyzes the reversible oxidation of malate to oxaloacetate. This Anaplasma marginale (strain Florida) protein is Malate dehydrogenase.